Reading from the N-terminus, the 161-residue chain is Non-specific lipid transfer protein GPI-anchored 24 (161 aa).

The first 23 residues, 1 to 23, serve as a signal peptide directing secretion; the sequence is MAQTTTLILLLATLLVAATTVSG. Cystine bridges form between cysteine 42–cysteine 79, cysteine 49–cysteine 63, cysteine 64–cysteine 104, and cysteine 77–cysteine 113. An N-linked (GlcNAc...) asparagine glycan is attached at asparagine 92. Aspartate 138 carries the GPI-anchor amidated aspartate lipid modification. Positions 139 to 161 are cleaved as a propeptide — removed in mature form; the sequence is AASKLAGTGLVGIVVITIAAMFY.

This sequence belongs to the plant LTP family.

The protein localises to the cell membrane. In terms of biological role, probable lipid transfer protein. The chain is Non-specific lipid transfer protein GPI-anchored 24 from Arabidopsis thaliana (Mouse-ear cress).